The primary structure comprises 336 residues: MSSAVPLNVGITRSADSGASRADGEKRVLLAEPRGYCAGVDRAVETVEKALEKHGAPIYVRKEIVHNRHVVETLSDQGVVFVDETDEVPEGALLVFSAHGVSPAVHESAAARNLRTIDATCPLVTKVHQEAKRFARDDFDILLIGHEGHEEVEGTAGEAPDHVQLVDGPDSVDAVTVRDESKVIWLSQTTLSVDETMQTVARLRERFPSLQDPPSDDICYATQNRQVAVKAMAPECDLVIVVGSRNSSNSVRLVEVALGAGAKASYLVDYAREVDPAWLDGVRTVGITSGASVPEILVRGVIDLLDEHGFHDVQPVTTANETLVFALPRELRAART.

[4Fe-4S] cluster is bound at residue cysteine 37. Histidine 66 and histidine 99 together coordinate (2E)-4-hydroxy-3-methylbut-2-enyl diphosphate. Dimethylallyl diphosphate is bound by residues histidine 66 and histidine 99. Isopentenyl diphosphate contacts are provided by histidine 66 and histidine 99. A [4Fe-4S] cluster-binding site is contributed by cysteine 121. Histidine 149 provides a ligand contact to (2E)-4-hydroxy-3-methylbut-2-enyl diphosphate. Position 149 (histidine 149) interacts with dimethylallyl diphosphate. Histidine 149 contacts isopentenyl diphosphate. The active-site Proton donor is the glutamate 151. (2E)-4-hydroxy-3-methylbut-2-enyl diphosphate is bound at residue threonine 189. A [4Fe-4S] cluster-binding site is contributed by cysteine 219. 4 residues coordinate (2E)-4-hydroxy-3-methylbut-2-enyl diphosphate: serine 247, serine 248, asparagine 249, and serine 292. 4 residues coordinate dimethylallyl diphosphate: serine 247, serine 248, asparagine 249, and serine 292. Residues serine 247, serine 248, asparagine 249, and serine 292 each contribute to the isopentenyl diphosphate site.

Belongs to the IspH family. [4Fe-4S] cluster serves as cofactor.

It catalyses the reaction isopentenyl diphosphate + 2 oxidized [2Fe-2S]-[ferredoxin] + H2O = (2E)-4-hydroxy-3-methylbut-2-enyl diphosphate + 2 reduced [2Fe-2S]-[ferredoxin] + 2 H(+). The enzyme catalyses dimethylallyl diphosphate + 2 oxidized [2Fe-2S]-[ferredoxin] + H2O = (2E)-4-hydroxy-3-methylbut-2-enyl diphosphate + 2 reduced [2Fe-2S]-[ferredoxin] + 2 H(+). It functions in the pathway isoprenoid biosynthesis; dimethylallyl diphosphate biosynthesis; dimethylallyl diphosphate from (2E)-4-hydroxy-3-methylbutenyl diphosphate: step 1/1. It participates in isoprenoid biosynthesis; isopentenyl diphosphate biosynthesis via DXP pathway; isopentenyl diphosphate from 1-deoxy-D-xylulose 5-phosphate: step 6/6. In terms of biological role, catalyzes the conversion of 1-hydroxy-2-methyl-2-(E)-butenyl 4-diphosphate (HMBPP) into a mixture of isopentenyl diphosphate (IPP) and dimethylallyl diphosphate (DMAPP). Acts in the terminal step of the DOXP/MEP pathway for isoprenoid precursor biosynthesis. This is 4-hydroxy-3-methylbut-2-enyl diphosphate reductase from Rhodococcus opacus (strain B4).